Consider the following 489-residue polypeptide: Rhamnulokinase (489 aa).

13–17 (ASSGR) is an ATP binding site. The cysteines at positions 68 and 222 are disulfide-linked. Residues G83 and 236 to 238 (HDT) each bind substrate. D237 (proton acceptor) is an active-site residue. T259 is a binding site for ATP. N296 serves as a coordination point for substrate. Q304 provides a ligand contact to ATP. A disulfide bridge connects residues C353 and C370. Residue G402 participates in ATP binding. Cysteines 413 and 417 form a disulfide.

It belongs to the rhamnulokinase family. As to quaternary structure, monomer. Requires Mg(2+) as cofactor.

It carries out the reaction L-rhamnulose + ATP = L-rhamnulose 1-phosphate + ADP + H(+). The protein operates within carbohydrate degradation; L-rhamnose degradation; glycerone phosphate from L-rhamnose: step 2/3. Involved in the catabolism of L-rhamnose (6-deoxy-L-mannose). Catalyzes the transfer of the gamma-phosphate group from ATP to the 1-hydroxyl group of L-rhamnulose to yield L-rhamnulose 1-phosphate. This chain is Rhamnulokinase, found in Escherichia coli (strain SE11).